The chain runs to 185 residues: Ribosome maturation factor RimM (185 aa).

Residues 106–185 (EGDYYWKDLM…SIEVDWDPGF (80 aa)) form the PRC barrel domain.

Belongs to the RimM family. As to quaternary structure, binds ribosomal protein uS19.

The protein resides in the cytoplasm. An accessory protein needed during the final step in the assembly of 30S ribosomal subunit, possibly for assembly of the head region. Essential for efficient processing of 16S rRNA. May be needed both before and after RbfA during the maturation of 16S rRNA. It has affinity for free ribosomal 30S subunits but not for 70S ribosomes. The chain is Ribosome maturation factor RimM from Shigella dysenteriae serotype 1 (strain Sd197).